The chain runs to 177 residues: NAD(P)H-quinone oxidoreductase subunit 6, chloroplastic (177 aa).

5 helical membrane passes run I10–T30, P32–P52, A61–M81, F92–I112, and F152–A172.

This sequence belongs to the complex I subunit 6 family. NDH is composed of at least 16 different subunits, 5 of which are encoded in the nucleus.

The protein localises to the plastid. Its subcellular location is the chloroplast thylakoid membrane. The catalysed reaction is a plastoquinone + NADH + (n+1) H(+)(in) = a plastoquinol + NAD(+) + n H(+)(out). The enzyme catalyses a plastoquinone + NADPH + (n+1) H(+)(in) = a plastoquinol + NADP(+) + n H(+)(out). Its function is as follows. NDH shuttles electrons from NAD(P)H:plastoquinone, via FMN and iron-sulfur (Fe-S) centers, to quinones in the photosynthetic chain and possibly in a chloroplast respiratory chain. The immediate electron acceptor for the enzyme in this species is believed to be plastoquinone. Couples the redox reaction to proton translocation, and thus conserves the redox energy in a proton gradient. This chain is NAD(P)H-quinone oxidoreductase subunit 6, chloroplastic (ndhG), found in Nuphar advena (Common spatterdock).